The primary structure comprises 316 residues: Ribosomal RNA small subunit methyltransferase H (316 aa).

S-adenosyl-L-methionine contacts are provided by residues Gly35–His37, Asp55, Phe79, Asp101, and Gln108.

This sequence belongs to the methyltransferase superfamily. RsmH family.

The protein localises to the cytoplasm. The enzyme catalyses cytidine(1402) in 16S rRNA + S-adenosyl-L-methionine = N(4)-methylcytidine(1402) in 16S rRNA + S-adenosyl-L-homocysteine + H(+). Functionally, specifically methylates the N4 position of cytidine in position 1402 (C1402) of 16S rRNA. The sequence is that of Ribosomal RNA small subunit methyltransferase H from Aliivibrio fischeri (strain MJ11) (Vibrio fischeri).